The primary structure comprises 147 residues: MVHFTAEEKAIITSLWGKVNVEEDGGEALGRLLVVYPWTQRFFDTFGNLSSASAIMGNPKVKAHGKKVLSSLGEAIKNMDDLKGTFSHLSELHCDRLHVDPENFRLLGNVLVIVLAKHFGKEFTPQIQAACQKMVAGVATALAHKYH.

The Globin domain maps to 3-147 (HFTAEEKAII…VATALAHKYH (145 aa)). 2 residues coordinate heme b: histidine 64 and histidine 93.

The protein belongs to the globin family. As to quaternary structure, heterotetramer of two alpha chains and two gamma chains in fetal hemoglobin (Hb F). Red blood cells.

Gamma chains make up the fetal hemoglobin F, in combination with alpha chains. The sequence is that of Hemoglobin subunit gamma (HBG) from Otolemur crassicaudatus (Brown greater galago).